The following is a 519-amino-acid chain: Anthranilate synthase component 1 (519 aa).

L-tryptophan contacts are provided by residues S39 and 290–292 (PYM). 327–328 (GT) contributes to the chorismate binding site. E360 contacts Mg(2+). Residues Y448, R468, 482–484 (GAG), and G484 contribute to the chorismate site. E497 contributes to the Mg(2+) binding site.

The protein belongs to the anthranilate synthase component I family. In terms of assembly, heterotetramer consisting of two non-identical subunits: a beta subunit (TrpG) and a large alpha subunit (TrpE). Requires Mg(2+) as cofactor.

It catalyses the reaction chorismate + L-glutamine = anthranilate + pyruvate + L-glutamate + H(+). It functions in the pathway amino-acid biosynthesis; L-tryptophan biosynthesis; L-tryptophan from chorismate: step 1/5. Feedback inhibited by tryptophan. In terms of biological role, part of a heterotetrameric complex that catalyzes the two-step biosynthesis of anthranilate, an intermediate in the biosynthesis of L-tryptophan. In the first step, the glutamine-binding beta subunit (TrpG) of anthranilate synthase (AS) provides the glutamine amidotransferase activity which generates ammonia as a substrate that, along with chorismate, is used in the second step, catalyzed by the large alpha subunit of AS (TrpE) to produce anthranilate. In the absence of TrpG, TrpE can synthesize anthranilate directly from chorismate and high concentrations of ammonia. This chain is Anthranilate synthase component 1 (trpE), found in Serratia marcescens.